We begin with the raw amino-acid sequence, 254 residues long: Arginine/ornithine transport ATP-binding protein AotP (254 aa).

An ABC transporter domain is found at 4-249 (LEVQDLHKRY…PQSDRLKQFL (246 aa)). Residue 36-43 (GSSGSGKS) coordinates ATP.

It belongs to the ABC transporter superfamily.

The protein resides in the cell inner membrane. Its function is as follows. Part of the arginine-inducible binding-protein-dependent transport system for arginine and ornithine. Probably responsible for energy coupling to the transport system. This is Arginine/ornithine transport ATP-binding protein AotP (aotP) from Pseudomonas aeruginosa (strain ATCC 15692 / DSM 22644 / CIP 104116 / JCM 14847 / LMG 12228 / 1C / PRS 101 / PAO1).